The primary structure comprises 305 residues: Sulfate adenylyltransferase subunit 2 (305 aa).

This sequence belongs to the PAPS reductase family. CysD subfamily. Heterodimer composed of CysD, the smaller subunit, and CysN.

It carries out the reaction sulfate + ATP + H(+) = adenosine 5'-phosphosulfate + diphosphate. It participates in sulfur metabolism; hydrogen sulfide biosynthesis; sulfite from sulfate: step 1/3. Its function is as follows. With CysN forms the ATP sulfurylase (ATPS) that catalyzes the adenylation of sulfate producing adenosine 5'-phosphosulfate (APS) and diphosphate, the first enzymatic step in sulfur assimilation pathway. APS synthesis involves the formation of a high-energy phosphoric-sulfuric acid anhydride bond driven by GTP hydrolysis by CysN coupled to ATP hydrolysis by CysD. The chain is Sulfate adenylyltransferase subunit 2 from Myxococcus xanthus (strain DK1622).